The sequence spans 774 residues: 5-methyltetrahydropteroyltriglutamate--homocysteine methyltransferase (774 aa).

Residues 24-27 (RELK) and Lys120 contribute to the 5-methyltetrahydropteroyltri-L-glutamate site. L-homocysteine is bound by residues 446 to 448 (IGS) and Glu499. Residues 446-448 (IGS) and Glu499 each bind L-methionine. 5-methyltetrahydropteroyltri-L-glutamate is bound at residue Trp576. Asp614 contacts L-homocysteine. Asp614 provides a ligand contact to L-methionine. Residue Glu620 coordinates 5-methyltetrahydropteroyltri-L-glutamate. The Zn(2+) site is built by His656, Cys658, and Glu680. His709 functions as the Proton donor in the catalytic mechanism. Residue Cys741 participates in Zn(2+) binding.

Belongs to the vitamin-B12 independent methionine synthase family. Zn(2+) serves as cofactor.

The enzyme catalyses 5-methyltetrahydropteroyltri-L-glutamate + L-homocysteine = tetrahydropteroyltri-L-glutamate + L-methionine. It functions in the pathway amino-acid biosynthesis; L-methionine biosynthesis via de novo pathway; L-methionine from L-homocysteine (MetE route): step 1/1. Catalyzes the transfer of a methyl group from 5-methyltetrahydrofolate to homocysteine resulting in methionine formation. The chain is 5-methyltetrahydropteroyltriglutamate--homocysteine methyltransferase from Streptomyces griseus subsp. griseus (strain JCM 4626 / CBS 651.72 / NBRC 13350 / KCC S-0626 / ISP 5235).